A 537-amino-acid chain; its full sequence is 2-isopropylmalate synthase (537 aa).

A Pyruvate carboxyltransferase domain is found at 8–269 (VLIFDTTLRD…YFNGYLGRAE (262 aa)). Positions 17, 208, 210, and 244 each coordinate Mn(2+). The segment at 408 to 537 (QLAGVQVSCG…QRAPLPAPAL (130 aa)) is regulatory domain.

The protein belongs to the alpha-IPM synthase/homocitrate synthase family. LeuA type 1 subfamily. Homodimer. Requires Mn(2+) as cofactor.

Its subcellular location is the cytoplasm. The catalysed reaction is 3-methyl-2-oxobutanoate + acetyl-CoA + H2O = (2S)-2-isopropylmalate + CoA + H(+). It functions in the pathway amino-acid biosynthesis; L-leucine biosynthesis; L-leucine from 3-methyl-2-oxobutanoate: step 1/4. Catalyzes the condensation of the acetyl group of acetyl-CoA with 3-methyl-2-oxobutanoate (2-ketoisovalerate) to form 3-carboxy-3-hydroxy-4-methylpentanoate (2-isopropylmalate). This is 2-isopropylmalate synthase from Synechococcus sp. (strain RCC307).